A 794-amino-acid chain; its full sequence is Lon protease (794 aa).

The Lon N-terminal domain maps to 29 to 222 (VPLLPLRGVL…TLISIIQDEQ (194 aa)). Position 374-381 (374-381 (GPPGVGKT)) interacts with ATP. The 182-residue stretch at 610 to 791 (TDQVGMATGL…DEVLEHALVG (182 aa)) folds into the Lon proteolytic domain. Active-site residues include serine 697 and lysine 740.

Belongs to the peptidase S16 family. As to quaternary structure, homohexamer. Organized in a ring with a central cavity.

It localises to the cytoplasm. The catalysed reaction is Hydrolysis of proteins in presence of ATP.. Functionally, ATP-dependent serine protease that mediates the selective degradation of mutant and abnormal proteins as well as certain short-lived regulatory proteins. Required for cellular homeostasis and for survival from DNA damage and developmental changes induced by stress. Degrades polypeptides processively to yield small peptide fragments that are 5 to 10 amino acids long. Binds to DNA in a double-stranded, site-specific manner. The sequence is that of Lon protease from Bacillus thuringiensis (strain Al Hakam).